The sequence spans 426 residues: Isocitrate dehydrogenase [NADP] (426 aa).

D-threo-isocitrate-binding residues include Ser-123, Asn-125, Arg-129, Arg-139, and Arg-162. Asp-312 provides a ligand contact to Mg(2+). NADP(+) contacts are provided by residues 344 to 350, Asn-357, and Lys-404; that span reads HGTAWDI.

The protein belongs to the isocitrate and isopropylmalate dehydrogenases family. Homodimer. The cofactor is Mg(2+). It depends on Mn(2+) as a cofactor.

The catalysed reaction is D-threo-isocitrate + NADP(+) = 2-oxoglutarate + CO2 + NADPH. Its function is as follows. Catalyzes the oxidative decarboxylation of isocitrate to 2-oxoglutarate and carbon dioxide with the concomitant reduction of NADP(+). This chain is Isocitrate dehydrogenase [NADP] (icd), found in Aquifex aeolicus (strain VF5).